We begin with the raw amino-acid sequence, 1573 residues long: Synaptojanin-1 (1573 aa).

Residues 119–442 form the SAC domain; the sequence is VRKVLNSGNF…GDSISKIYAG (324 aa). A catalytic region spans residues 500 to 899; sequence GSLRVSEQTL…GPPDGTVLVS (400 aa). Residues serine 820 and serine 830 each carry the phosphoserine modification. Positions 902-971 constitute an RRM domain; the sequence is SSLPENNFFD…RTITIALKSP (70 aa). The segment covering 1029–1054 has biased composition (low complexity); the sequence is HLQPSSSSGLGTSPSSSPRTSPCQSP. Disordered regions lie at residues 1029–1322, 1341–1360, 1370–1463, and 1535–1573; these read HLQP…PLKI, SVQT…QLPS, VSCM…GFKD, and SRRP…FTER. Serine 1053 is modified (phosphoserine). The span at 1108–1130 shows a compositional bias: pro residues; it reads PPPPRPVAPPTRPAPPQRPPPPS. 2 positions are modified to phosphoserine: serine 1150 and serine 1178. Position 1201 is an omega-N-methylarginine (arginine 1201). Threonine 1220 is subject to Phosphothreonine. Residues 1221–1234 show a composition bias toward polar residues; sequence PESQSKTSETSKGS. At serine 1292 the chain carries Phosphoserine. Positions 1293-1304 are enriched in low complexity; the sequence is SHSLPSEASSQP. Residues 1313–1322 show a composition bias toward basic and acidic residues; it reads DGKRESPLKI. Phosphoserine occurs at positions 1318 and 1345. Residue threonine 1349 is modified to Phosphothreonine. Over residues 1382–1407 the composition is skewed to polar residues; it reads RSQSQENMRSSPNPFITGLTRTNPFS. 3 repeat units span residues 1396 to 1398, 1406 to 1408, and 1417 to 1419. The segment at 1396–1419 is 3 X 3 AA repeats of N-P-F; the sequence is FITGLTRTNPFSDRTAAPGNPFRA. Pro residues predominate over residues 1536–1555; the sequence is RRPPPPPVPLLPPGTSPPVD. Serine 1551 and serine 1565 each carry phosphoserine.

The protein belongs to the synaptojanin family. In the central section; belongs to the inositol 1,4,5-trisphosphate 5-phosphatase family. Interacts with ASH/GRB2. Interacts with PACSIN1, PACSIN2 and PACSIN3. Interacts with AMPH, SH3GL1, SH3GL2 and SH3GL3. Interacts with MYO1E (via SH3 domain). Interacts with BIN1 and DNM1. Interacts with EPS15.

It localises to the cytoplasm. It is found in the perinuclear region. The catalysed reaction is a 1,2-diacyl-sn-glycero-3-phospho-(1D-myo-inositol-4,5-bisphosphate) + H2O = a 1,2-diacyl-sn-glycero-3-phospho-(1D-myo-inositol 4-phosphate) + phosphate. In terms of biological role, phosphatase that acts on various phosphoinositides, including phosphatidylinositol 4-phosphate, phosphatidylinositol (4,5)-bisphosphate and phosphatidylinositol (3,4,5)-trisphosphate. Has a role in clathrin-mediated endocytosis. Hydrolyzes PIP2 bound to actin regulatory proteins resulting in the rearrangement of actin filaments downstream of tyrosine kinase and ASH/GRB2. The sequence is that of Synaptojanin-1 (SYNJ1) from Homo sapiens (Human).